The following is a 1393-amino-acid chain: DNA-directed RNA polymerase subunit beta' (1393 aa).

Zn(2+) contacts are provided by Cys70, Cys72, Cys85, and Cys88. The Mg(2+) site is built by Asp461, Asp463, and Asp465. 4 residues coordinate Zn(2+): Cys815, Cys889, Cys896, and Cys899.

Belongs to the RNA polymerase beta' chain family. In terms of assembly, the RNAP catalytic core consists of 2 alpha, 1 beta, 1 beta' and 1 omega subunit. When a sigma factor is associated with the core the holoenzyme is formed, which can initiate transcription. Requires Mg(2+) as cofactor. Zn(2+) is required as a cofactor.

The enzyme catalyses RNA(n) + a ribonucleoside 5'-triphosphate = RNA(n+1) + diphosphate. Functionally, DNA-dependent RNA polymerase catalyzes the transcription of DNA into RNA using the four ribonucleoside triphosphates as substrates. The chain is DNA-directed RNA polymerase subunit beta' from Vesicomyosocius okutanii subsp. Calyptogena okutanii (strain HA).